The following is a 1001-amino-acid chain: Chloride channel protein clh-3 (1001 aa).

Topologically, residues methionine 1–valine 48 are cytoplasmic. A run of 2 helical transmembrane segments spans residues isoleucine 49–aspartate 85 and histidine 91–isoleucine 117. Positions glycine 123–proline 127 match the Selectivity filter part_1 motif. Serine 124 is a binding site for chloride. Residues isoleucine 126–leucine 133 constitute an intramembrane region (helical). The next 2 membrane-spanning stretches (helical) occupy residues leucine 142–serine 160 and glutamate 167–valine 185. Positions glycine 165–proline 169 match the Selectivity filter part_2 motif. 2 intramembrane regions (helical) span residues methionine 202–threonine 214 and proline 218–isoleucine 226. 5 helical membrane-spanning segments follow: residues tyrosine 238–phenylalanine 258, leucine 285–leucine 313, isoleucine 322–leucine 341, tyrosine 405–alanine 425, and glycine 433–leucine 456. Positions glycine 433–proline 437 match the Selectivity filter part_3 motif. Isoleucine 434 and phenylalanine 435 together coordinate chloride. Positions glycine 473 to valine 487 form an intramembrane region, helical. Positions threonine 488–histidine 489 form an intramembrane region, note=Loop between two helices. The segment at residues threonine 490–threonine 501 is an intramembrane region (helical). Positions glycine 502–histidine 506 form an intramembrane region, note=Loop between two helices. The chain crosses the membrane as a helical span at residues leucine 507–leucine 524. The Cytoplasmic portion of the chain corresponds to glutamine 525 to phenylalanine 1001. Tyrosine 529 contacts chloride. The region spanning methionine 560 to threonine 619 is the CBS 1 domain. Residues glutamate 625–glutamate 657 are a coiled coil. Positions leucine 634 to aspartate 650 are enriched in basic and acidic residues. The disordered stretch occupies residues leucine 634–glycine 662. Serine 742 and serine 747 each carry phosphoserine; by gck-3. Positions isoleucine 788–valine 845 constitute a CBS 2 domain.

The protein belongs to the chloride channel (TC 2.A.49) family. As to quaternary structure, isoform a interacts (via RFLI motif) with gck-3 (via C-terminus). Post-translationally, phosphorylated by gck-3; phosphorylation at both Ser-742 and Ser-747 is required to inhibit channel activity. Dephosphorylated by gsp-1/2 during cell swelling and oocyte meiotic maturation, which results in channel activation. In terms of tissue distribution, expressed in excretory cell, 4 anterior epithelial cells of the intestine, hermaphrodite-specific neurons and enteric muscles. Expressed also in vulva and uterus. Isoform a is expressed in oocytes (at protein level).

It localises to the cell membrane. Functionally, voltage-gated chloride channel. Insensitive to depolarizing conditioning voltages, requires low voltages for activation, insensitive to chloride levels and has a mild sensitivity to low pH. Channel gating properties are conferred by the cytoplasmic C-terminus. Plays a role in egg laying by modulating hermaphrodite-specific neurons (HSN) excitability and the ovulatory contractions of gap-junction-coupled gonadal sheath cells. When active, may prevent tubular formation of the excretory canals. Activated during oocyte meiotic maturation and by membrane hyperpolarization and cell swelling. Inhibited by Zn(2+) and to a lesser extent by Cd(2+). Voltage-gated chloride channel. Sensitive to depolarizing conditioning voltages, requires stronger voltages for activation and activation is slower, is inhibited by low concentrations of chloride and is activated by low pH. Channel gating properties are conferred by the cytoplasmic C-terminus. This Caenorhabditis elegans protein is Chloride channel protein clh-3.